A 126-amino-acid polypeptide reads, in one-letter code: Aspartate 1-decarboxylase (126 aa).

The active-site Schiff-base intermediate with substrate; via pyruvic acid is the Ser25. Position 25 is a pyruvic acid (Ser) (Ser25). Thr57 contributes to the substrate binding site. Tyr58 acts as the Proton donor in catalysis. 73-75 (GAA) provides a ligand contact to substrate.

The protein belongs to the PanD family. As to quaternary structure, heterooctamer of four alpha and four beta subunits. The cofactor is pyruvate. Post-translationally, is synthesized initially as an inactive proenzyme, which is activated by self-cleavage at a specific serine bond to produce a beta-subunit with a hydroxyl group at its C-terminus and an alpha-subunit with a pyruvoyl group at its N-terminus.

Its subcellular location is the cytoplasm. It carries out the reaction L-aspartate + H(+) = beta-alanine + CO2. Its pathway is cofactor biosynthesis; (R)-pantothenate biosynthesis; beta-alanine from L-aspartate: step 1/1. Its function is as follows. Catalyzes the pyruvoyl-dependent decarboxylation of aspartate to produce beta-alanine. The sequence is that of Aspartate 1-decarboxylase from Salmonella choleraesuis (strain SC-B67).